Consider the following 324-residue polypeptide: Corticotropin-releasing factor-binding protein (324 aa).

Residues 1–23 (MAPTLKLQCHFILVCLLALRGES) form the signal peptide. 5 disulfide bridges follow: Cys62/Cys83, Cys106/Cys143, Cys185/Cys207, Cys239/Cys266, and Cys279/Cys320. N-linked (GlcNAc...) asparagine glycosylation occurs at Asn206.

Belongs to the CRF-binding protein family.

It localises to the secreted. Functionally, binds CRF and inactivates it. May prevent inappropriate pituitary-adrenal stimulation in pregnancy. This is Corticotropin-releasing factor-binding protein (CRHBP) from Ovis aries (Sheep).